The chain runs to 621 residues: Chaperone protein HtpG (621 aa).

Positions 1-325 (MTDASVKETF…SQDLSLNVSR (325 aa)) are a; substrate-binding. Residues 326-541 (EMLQSDPKLA…EGDIDVNLER (216 aa)) are b. Residues 542–621 (MLKRHGQLQD…RLGSVMDSAL (80 aa)) are c.

The protein belongs to the heat shock protein 90 family. As to quaternary structure, homodimer.

It is found in the cytoplasm. In terms of biological role, molecular chaperone. Has ATPase activity. This Roseobacter denitrificans (strain ATCC 33942 / OCh 114) (Erythrobacter sp. (strain OCh 114)) protein is Chaperone protein HtpG.